The primary structure comprises 605 residues: Phosphoenolpyruvate carboxykinase (ATP) (605 aa).

Residues 27-48 (SGPSSSFINNNNSNNNNNKSSN) show a composition bias toward low complexity. Positions 27 to 67 (SGPSSSFINNNNSNNNNNKSSNMFNHDHVNKTNLHPGGVKP) are disordered. 307 to 314 (GLSGTGKT) is a binding site for ATP.

Belongs to the phosphoenolpyruvate carboxykinase (ATP) family.

The catalysed reaction is oxaloacetate + ATP = phosphoenolpyruvate + ADP + CO2. The protein operates within carbohydrate biosynthesis; gluconeogenesis. This chain is Phosphoenolpyruvate carboxykinase (ATP) (acu-6), found in Neurospora crassa (strain ATCC 24698 / 74-OR23-1A / CBS 708.71 / DSM 1257 / FGSC 987).